The primary structure comprises 145 residues: D-aminoacyl-tRNA deacylase (145 aa).

The short motif at 137–138 (GP) is the Gly-cisPro motif, important for rejection of L-amino acids element.

Belongs to the DTD family. In terms of assembly, homodimer.

Its subcellular location is the cytoplasm. It carries out the reaction glycyl-tRNA(Ala) + H2O = tRNA(Ala) + glycine + H(+). It catalyses the reaction a D-aminoacyl-tRNA + H2O = a tRNA + a D-alpha-amino acid + H(+). In terms of biological role, an aminoacyl-tRNA editing enzyme that deacylates mischarged D-aminoacyl-tRNAs. Also deacylates mischarged glycyl-tRNA(Ala), protecting cells against glycine mischarging by AlaRS. Acts via tRNA-based rather than protein-based catalysis; rejects L-amino acids rather than detecting D-amino acids in the active site. By recycling D-aminoacyl-tRNA to D-amino acids and free tRNA molecules, this enzyme counteracts the toxicity associated with the formation of D-aminoacyl-tRNA entities in vivo and helps enforce protein L-homochirality. In Stutzerimonas stutzeri (strain A1501) (Pseudomonas stutzeri), this protein is D-aminoacyl-tRNA deacylase.